Consider the following 470-residue polypeptide: MNPNQKIITIGSISLGLVVFNVLLHVVSIIVTVLVLGRGGKNRICNETVVREYNETVRIEKVTQWHNTNVIEYVPYWNEGTYMNNTEAICDVKGFAPFSKDNGIRIGSRGHVFVIREPFVSCSPTECRTFFLTQGSLLNDKHSNGTVKDRSPFRTLMSVEVGQPPNVYQARFEAVAWSATACHDGKKWMTIGVTGPDSKAIAVVHYGGVPTDVVNSWAGDILRTQESSCTCIQGDCYWVMTDGPANRQAQYRIYKANQGRIVGQTDVSLDGGHIEECSCYPNDGKVECVCRDNWTGTNRPVLVISPDLSYRVGYLCAGLPSDTPRGEDAQFIGSCTSPMGNKEYGVKGFGFRQGTDVWMGRTISRTSRSGFEILRVKNGWTQTSKEQVRKQVVVDNLNWSGYSGSFTLPVELSGKDCLVPCFWVEMIRGKPEEKTIWTSSSSIVMCGVNYEVADWSWHDGAILPFDIDKM.

Over methionine 1–serine 14 the chain is Intravirion. An involved in apical transport and lipid raft association region spans residues glycine 11–threonine 32. Residues leucine 15–valine 35 traverse the membrane as a helical segment. A hypervariable stalk region region spans residues threonine 32–threonine 86. Topologically, residues leucine 36–methionine 470 are virion surface. N-linked (GlcNAc...) asparagine; by host glycans are attached at residues asparagine 46, asparagine 54, and asparagine 84. Residues isoleucine 89–methionine 470 are head of neuraminidase. 8 disulfide bridges follow: cysteine 90/cysteine 417, cysteine 122/cysteine 127, cysteine 182/cysteine 229, cysteine 231/cysteine 236, cysteine 277/cysteine 290, cysteine 279/cysteine 288, cysteine 316/cysteine 335, and cysteine 421/cysteine 446. A substrate-binding site is contributed by arginine 116. Asparagine 144 carries an N-linked (GlcNAc...) asparagine; by host glycan. Catalysis depends on aspartate 149, which acts as the Proton donor/acceptor. Residue arginine 150 coordinates substrate. Glutamate 275 to glutamate 276 lines the substrate pocket. Arginine 291 contacts substrate. Aspartate 292 is a binding site for Ca(2+). The N-linked (GlcNAc...) asparagine; by host glycan is linked to asparagine 293. The Ca(2+) site is built by glycine 296 and aspartate 322. Substrate is bound at residue arginine 368. Residue asparagine 398 is glycosylated (N-linked (GlcNAc...) asparagine; by host). The Nucleophile role is filled by tyrosine 402.

This sequence belongs to the glycosyl hydrolase 34 family. Homotetramer. Requires Ca(2+) as cofactor. In terms of processing, N-glycosylated.

Its subcellular location is the virion membrane. The protein localises to the host apical cell membrane. It carries out the reaction Hydrolysis of alpha-(2-&gt;3)-, alpha-(2-&gt;6)-, alpha-(2-&gt;8)- glycosidic linkages of terminal sialic acid residues in oligosaccharides, glycoproteins, glycolipids, colominic acid and synthetic substrates.. Its activity is regulated as follows. Inhibited by the neuraminidase inhibitors zanamivir (Relenza) and oseltamivir (Tamiflu). These drugs interfere with the release of progeny virus from infected cells and are effective against all influenza strains. Resistance to neuraminidase inhibitors is quite rare. In terms of biological role, catalyzes the removal of terminal sialic acid residues from viral and cellular glycoconjugates. Cleaves off the terminal sialic acids on the glycosylated HA during virus budding to facilitate virus release. Additionally helps virus spread through the circulation by further removing sialic acids from the cell surface. These cleavages prevent self-aggregation and ensure the efficient spread of the progeny virus from cell to cell. Otherwise, infection would be limited to one round of replication. Described as a receptor-destroying enzyme because it cleaves a terminal sialic acid from the cellular receptors. May facilitate viral invasion of the upper airways by cleaving the sialic acid moieties on the mucin of the airway epithelial cells. Likely to plays a role in the budding process through its association with lipid rafts during intracellular transport. May additionally display a raft-association independent effect on budding. Plays a role in the determination of host range restriction on replication and virulence. Sialidase activity in late endosome/lysosome traffic seems to enhance virus replication. The protein is Neuraminidase of Influenza A virus (strain A/Equine/Jillin/1/1989 H3N8).